The primary structure comprises 131 residues: MAFFNLHLLGYQNSFRSKKRDKTEETNQKDPVPTRLPPIFSEDGNYSVHQNSHTKYHEAVRKVSLKTFPNQVFRVPLTDAQNFSFWRSNAAGARPEETMPWIQNPRHCLIKSAMTRFMDHSILNDRNFSLY.

Residues 17 to 44 form a disordered region; that stretch reads SKKRDKTEETNQKDPVPTRLPPIFSEDG.

In terms of assembly, microtubule inner protein component of sperm flagellar doublet microtubules. As to expression, expressed in sperm.

It localises to the cytoplasm. The protein resides in the cytoskeleton. The protein localises to the flagellum axoneme. Functionally, microtubule inner protein (MIP) part of the dynein-decorated doublet microtubules (DMTs) in flagellum axoneme. May serve to reinforce and thus stabilize the microtubule structure in the sperm flagella. In Bos taurus (Bovine), this protein is Sperm microtubule inner protein 11 (SPMIP11).